The following is a 351-amino-acid chain: Probable dual-specificity RNA methyltransferase RlmN (351 aa).

Residue Glu-102 is the Proton acceptor of the active site. One can recognise a Radical SAM core domain in the interval 110 to 339 (DGGRKTICIS…ILNRRSPGKD (230 aa)). Cysteines 117 and 344 form a disulfide. The [4Fe-4S] cluster site is built by Cys-124, Cys-128, and Cys-131. Residues 171 to 172 (GE), Ser-203, 226 to 228 (SLN), and Asn-302 contribute to the S-adenosyl-L-methionine site. Cys-344 (S-methylcysteine intermediate) is an active-site residue.

The protein belongs to the radical SAM superfamily. RlmN family. [4Fe-4S] cluster serves as cofactor.

Its subcellular location is the cytoplasm. The enzyme catalyses adenosine(2503) in 23S rRNA + 2 reduced [2Fe-2S]-[ferredoxin] + 2 S-adenosyl-L-methionine = 2-methyladenosine(2503) in 23S rRNA + 5'-deoxyadenosine + L-methionine + 2 oxidized [2Fe-2S]-[ferredoxin] + S-adenosyl-L-homocysteine. It carries out the reaction adenosine(37) in tRNA + 2 reduced [2Fe-2S]-[ferredoxin] + 2 S-adenosyl-L-methionine = 2-methyladenosine(37) in tRNA + 5'-deoxyadenosine + L-methionine + 2 oxidized [2Fe-2S]-[ferredoxin] + S-adenosyl-L-homocysteine. Specifically methylates position 2 of adenine 2503 in 23S rRNA and position 2 of adenine 37 in tRNAs. The chain is Probable dual-specificity RNA methyltransferase RlmN from Leptospira borgpetersenii serovar Hardjo-bovis (strain JB197).